Here is a 160-residue protein sequence, read N- to C-terminus: SsrA-binding protein (160 aa).

Belongs to the SmpB family.

The protein resides in the cytoplasm. Its function is as follows. Required for rescue of stalled ribosomes mediated by trans-translation. Binds to transfer-messenger RNA (tmRNA), required for stable association of tmRNA with ribosomes. tmRNA and SmpB together mimic tRNA shape, replacing the anticodon stem-loop with SmpB. tmRNA is encoded by the ssrA gene; the 2 termini fold to resemble tRNA(Ala) and it encodes a 'tag peptide', a short internal open reading frame. During trans-translation Ala-aminoacylated tmRNA acts like a tRNA, entering the A-site of stalled ribosomes, displacing the stalled mRNA. The ribosome then switches to translate the ORF on the tmRNA; the nascent peptide is terminated with the 'tag peptide' encoded by the tmRNA and targeted for degradation. The ribosome is freed to recommence translation, which seems to be the essential function of trans-translation. The chain is SsrA-binding protein from Nocardia farcinica (strain IFM 10152).